A 207-amino-acid polypeptide reads, in one-letter code: Superoxide dismutase [Mn] (207 aa).

Positions 28, 76, 160, and 164 each coordinate Mn(2+).

Belongs to the iron/manganese superoxide dismutase family. It depends on Mn(2+) as a cofactor.

It catalyses the reaction 2 superoxide + 2 H(+) = H2O2 + O2. Functionally, destroys superoxide anion radicals which are normally produced within the cells and which are toxic to biological systems. The chain is Superoxide dismutase [Mn] (sodA) from Mycobacterium intracellulare (strain ATCC 13950 / DSM 43223 / JCM 6384 / NCTC 13025 / 3600).